A 355-amino-acid chain; its full sequence is Nematocyst expressed protein 3 (355 aa).

Positions 1–18 (MKLTYILLIAVVGVAIEA) are cleaved as a signal peptide. 3 consecutive ShKT domains span residues 50–89 (CKDV…CKLC), 107–134 (QPQQ…CQLC), and 140–182 (SGPV…CNTY). Disulfide bonds link cysteine 50–cysteine 89, cysteine 57–cysteine 82, cysteine 71–cysteine 86, cysteine 116–cysteine 131, cysteine 149–cysteine 175, and cysteine 158–cysteine 179. Residues 92–355 (KRSKKQSDYM…KKSKSHKKQH (264 aa)) constitute a propeptide that is removed on maturation. The interval 202–355 (YQPNAMPTPP…KKSKSHKKQH (154 aa)) is disordered. The span at 207–221 (MPTPPQGVTPAPLPP) shows a compositional bias: pro residues. Low complexity-rich tracts occupy residues 222 to 232 (YFQQQGYGYPQ), 240 to 270 (VQPG…TTTE), and 277 to 332 (TEAA…AQSD). The segment covering 335–355 (NKKKHKKDKAQKKSKSHKKQH) has biased composition (basic residues).

It belongs to the NEP3 family. In terms of tissue distribution, nematocytes. In late planulae, transcripts are found throughout the ectoderm in nematocytes, with high concentration of expressing cells in the oral pole. In primary polyps, is expressed in nematocytes in the body wall and physa ectoderm and in the upper and lower pharynx.

The protein localises to the nematocyst. The protein resides in the secreted. Neurotoxin. In vivo, induces pronounced contraction and tail twitching on zebrafish larvae, as well as death 5 hours later. This chain is Nematocyst expressed protein 3, found in Nematostella vectensis (Starlet sea anemone).